The following is a 360-amino-acid chain: Probable cinnamyl alcohol dehydrogenase 1 (360 aa).

Cys47 contributes to the Zn(2+) binding site. Residue Thr49 participates in NADP(+) binding. The Zn(2+) site is built by His69, Glu70, Cys100, Cys103, Cys106, Cys114, and Cys163. NADP(+) contacts are provided by residues Thr167, 189 to 194 (GLGGVG), 212 to 217 (SSSDKK), Thr252, Gly276, and 299 to 301 (SFI).

Belongs to the zinc-containing alcohol dehydrogenase family. Homodimer. Zn(2+) is required as a cofactor.

It carries out the reaction (E)-cinnamyl alcohol + NADP(+) = (E)-cinnamaldehyde + NADPH + H(+). The catalysed reaction is (E)-coniferol + NADP(+) = (E)-coniferaldehyde + NADPH + H(+). It catalyses the reaction (E)-sinapyl alcohol + NADP(+) = (E)-sinapaldehyde + NADPH + H(+). The enzyme catalyses (E)-4-coumaroyl alcohol + NADP(+) = (E)-4-coumaraldehyde + NADPH + H(+). It carries out the reaction (E)-caffeyl alcohol + NADP(+) = (E)-caffeyl aldehyde + NADPH + H(+). The protein operates within aromatic compound metabolism; phenylpropanoid biosynthesis. Functionally, involved in lignin biosynthesis. Catalyzes the final step specific for the production of lignin monomers. Catalyzes the NADPH-dependent reduction of coniferaldehyde, 5-hydroxyconiferaldehyde, sinapaldehyde, 4-coumaraldehyde and caffeyl aldehyde to their respective alcohols. The polypeptide is Probable cinnamyl alcohol dehydrogenase 1 (CAD1) (Aralia cordata (Udo)).